A 198-amino-acid chain; its full sequence is dCTP deaminase (198 aa).

Residues 99–104 (RSSLGR), 125–127 (TLE), and Gln144 each bind dCTP. The active-site Proton donor/acceptor is Glu127.

It belongs to the dCTP deaminase family. As to quaternary structure, homotrimer.

The enzyme catalyses dCTP + H2O + H(+) = dUTP + NH4(+). The protein operates within pyrimidine metabolism; dUMP biosynthesis; dUMP from dCTP (dUTP route): step 1/2. Functionally, catalyzes the deamination of dCTP to dUTP. This Rhodopirellula baltica (strain DSM 10527 / NCIMB 13988 / SH1) protein is dCTP deaminase.